The sequence spans 511 residues: Lariat debranching enzyme (511 aa).

The a divalent metal cation site is built by cysteine 52, histidine 54, aspartate 83, and asparagine 128. The lariat recognition loop stretch occupies residues serine 168–arginine 198. Residues histidine 226, histidine 278, and histidine 280 each coordinate a divalent metal cation. The tract at residues glutamate 473 to leucine 511 is disordered. Basic and acidic residues predominate over residues isoleucine 477–lysine 498.

It belongs to the lariat debranching enzyme family. It depends on Fe(2+) as a cofactor. Requires Zn(2+) as cofactor. Mn(2+) is required as a cofactor.

The protein localises to the nucleus. Active in presence of diverse metals including Fe(2+), Zn(2+), Mn(2+). Binds two metal cations in two adjacent alpha and beta metal-binding pockets. Its function is as follows. Cleaves the 2'-5' phosphodiester linkage at the branch point of lariat intron pre-mRNAs after splicing and converts them into linear molecules that are subsequently degraded. It thereby facilitates ribonucleotide turnover. In Caenorhabditis briggsae, this protein is Lariat debranching enzyme (dbr-1).